Reading from the N-terminus, the 430-residue chain is Adenylosuccinate synthetase (430 aa).

GTP-binding positions include 12–18 and 40–42; these read GDEGKGK and GHT. The active-site Proton acceptor is the aspartate 13. The Mg(2+) site is built by aspartate 13 and glycine 40. Residues 13–16, 38–41, threonine 129, arginine 143, glutamine 224, threonine 239, and arginine 303 contribute to the IMP site; these read DEGK and NAGH. The Proton donor role is filled by histidine 41. 299 to 305 is a substrate binding site; it reads TVSNRER. GTP contacts are provided by residues arginine 305, 331–333, and 413–415; these read KLD and STG.

The protein belongs to the adenylosuccinate synthetase family. In terms of assembly, homodimer. The cofactor is Mg(2+).

Its subcellular location is the cytoplasm. The enzyme catalyses IMP + L-aspartate + GTP = N(6)-(1,2-dicarboxyethyl)-AMP + GDP + phosphate + 2 H(+). Its pathway is purine metabolism; AMP biosynthesis via de novo pathway; AMP from IMP: step 1/2. Functionally, plays an important role in the de novo pathway of purine nucleotide biosynthesis. Catalyzes the first committed step in the biosynthesis of AMP from IMP. The chain is Adenylosuccinate synthetase from Ehrlichia ruminantium (strain Gardel).